Here is an 874-residue protein sequence, read N- to C-terminus: Alanine--tRNA ligase (874 aa).

Positions 564, 568, 665, and 669 each coordinate Zn(2+).

Belongs to the class-II aminoacyl-tRNA synthetase family. Zn(2+) serves as cofactor.

The protein resides in the cytoplasm. It carries out the reaction tRNA(Ala) + L-alanine + ATP = L-alanyl-tRNA(Ala) + AMP + diphosphate. In terms of biological role, catalyzes the attachment of alanine to tRNA(Ala) in a two-step reaction: alanine is first activated by ATP to form Ala-AMP and then transferred to the acceptor end of tRNA(Ala). Also edits incorrectly charged Ser-tRNA(Ala) and Gly-tRNA(Ala) via its editing domain. The sequence is that of Alanine--tRNA ligase from Delftia acidovorans (strain DSM 14801 / SPH-1).